Reading from the N-terminus, the 334-residue chain is Malate dehydrogenase (334 aa).

An NAD(+)-binding site is contributed by 17-23 (GAAGQIG). Residues Arg-98 and Arg-104 each coordinate substrate. NAD(+) is bound by residues Asn-111, Gln-118, and 135-137 (VGN). Substrate-binding residues include Asn-137 and Arg-168. His-193 functions as the Proton acceptor in the catalytic mechanism.

The protein belongs to the LDH/MDH superfamily. MDH type 2 family.

The catalysed reaction is (S)-malate + NAD(+) = oxaloacetate + NADH + H(+). Functionally, catalyzes the reversible oxidation of malate to oxaloacetate. The chain is Malate dehydrogenase from Deinococcus geothermalis (strain DSM 11300 / CIP 105573 / AG-3a).